The primary structure comprises 156 residues: Superoxide dismutase [Cu-Zn] 2 (156 aa).

Residues H47, H49, and H64 each contribute to the Cu cation site. Residues C58 and C147 are joined by a disulfide bond. Zn(2+)-binding residues include H64, H72, H81, and D84. Cu cation is bound at residue H121.

The protein belongs to the Cu-Zn superoxide dismutase family. Homodimer. It depends on Cu cation as a cofactor. Zn(2+) serves as cofactor.

The protein localises to the cytoplasm. It catalyses the reaction 2 superoxide + 2 H(+) = H2O2 + O2. Functionally, destroys radicals which are normally produced within the cells and which are toxic to biological systems. This chain is Superoxide dismutase [Cu-Zn] 2 (SODCC.2), found in Mesembryanthemum crystallinum (Common ice plant).